Consider the following 341-residue polypeptide: S-adenosylmethionine:tRNA ribosyltransferase-isomerase (341 aa).

It belongs to the QueA family. Monomer.

Its subcellular location is the cytoplasm. The enzyme catalyses 7-aminomethyl-7-carbaguanosine(34) in tRNA + S-adenosyl-L-methionine = epoxyqueuosine(34) in tRNA + adenine + L-methionine + 2 H(+). It participates in tRNA modification; tRNA-queuosine biosynthesis. In terms of biological role, transfers and isomerizes the ribose moiety from AdoMet to the 7-aminomethyl group of 7-deazaguanine (preQ1-tRNA) to give epoxyqueuosine (oQ-tRNA). The sequence is that of S-adenosylmethionine:tRNA ribosyltransferase-isomerase from Desulfitobacterium hafniense (strain DSM 10664 / DCB-2).